We begin with the raw amino-acid sequence, 758 residues long: 5-methyltetrahydropteroyltriglutamate--homocysteine methyltransferase (758 aa).

5-methyltetrahydropteroyltri-L-glutamate-binding positions include Arg-17 to Lys-20 and Lys-114. L-homocysteine is bound by residues Ile-429–Ser-431 and Glu-482. L-methionine is bound by residues Ile-429 to Ser-431 and Glu-482. Residues Arg-513–Cys-514 and Trp-559 contribute to the 5-methyltetrahydropteroyltri-L-glutamate site. Asp-597 contributes to the L-homocysteine binding site. Residue Asp-597 participates in L-methionine binding. A 5-methyltetrahydropteroyltri-L-glutamate-binding site is contributed by Glu-603. 3 residues coordinate Zn(2+): His-639, Cys-641, and Glu-663. The active-site Proton donor is the His-692. Cys-724 is a Zn(2+) binding site.

This sequence belongs to the vitamin-B12 independent methionine synthase family. The cofactor is Zn(2+).

The catalysed reaction is 5-methyltetrahydropteroyltri-L-glutamate + L-homocysteine = tetrahydropteroyltri-L-glutamate + L-methionine. The protein operates within amino-acid biosynthesis; L-methionine biosynthesis via de novo pathway; L-methionine from L-homocysteine (MetE route): step 1/1. Catalyzes the transfer of a methyl group from 5-methyltetrahydrofolate to homocysteine resulting in methionine formation. In Buchnera aphidicola subsp. Acyrthosiphon pisum (strain APS) (Acyrthosiphon pisum symbiotic bacterium), this protein is 5-methyltetrahydropteroyltriglutamate--homocysteine methyltransferase.